The chain runs to 487 residues: MKDILKLSIAEMHDKLKKREFSAVELTKLHIEAVDNEKLNAFVTKTPEIALSAAEKADHIFTHQQENLTPLTGIPVGIKDLFCTKNVRTTACSNILKNFIPQYDSTVTKLLLNNGAVMLGKLNMDEFAMGSSNSNSCFGNVKNPWIRADGAEVVPGGSSGGSSAAVAGFLCAGALGSDTGGSVRQPAAFCGIVGLKPTYGRCSRLGMIAFASSLDQAGVLTRTVEDSALMLQSICGYDTQDPTSVNINVPKFSESITHKIKGTRIGIPKEYELSEKHKEYAEISEMWSKGIQYLKDEGAEIIEISLPHTSYALPVYYIICSAEASSNLARYDGIRYGTRISSDDINEMYKLTRGYNFGTEVKRRILIGAYALSSGYYDAYYNKAQCIRRLVTNDFIESFKKIDYILTPTAPKEAFSINEQLDTLTMYLNDVFTVPASLAGLPAISVPIGLSKNNLPLSLQIIGNYYDEGGILNLASIIEKHTGRILK.

Residues lysine 79 and serine 158 each act as charge relay system in the active site. Serine 182 functions as the Acyl-ester intermediate in the catalytic mechanism.

It belongs to the amidase family. GatA subfamily. In terms of assembly, heterotrimer of A, B and C subunits.

It catalyses the reaction L-glutamyl-tRNA(Gln) + L-glutamine + ATP + H2O = L-glutaminyl-tRNA(Gln) + L-glutamate + ADP + phosphate + H(+). Allows the formation of correctly charged Gln-tRNA(Gln) through the transamidation of misacylated Glu-tRNA(Gln) in organisms which lack glutaminyl-tRNA synthetase. The reaction takes place in the presence of glutamine and ATP through an activated gamma-phospho-Glu-tRNA(Gln). The sequence is that of Glutamyl-tRNA(Gln) amidotransferase subunit A from Ehrlichia canis (strain Jake).